A 614-amino-acid polypeptide reads, in one-letter code: Adenylate kinase 7 (614 aa).

The adenylate kinase stretch occupies residues 258 to 503; it reads PIKICILGPP…KEIGKPRNYG (246 aa). Residue 268 to 273 coordinates ATP; that stretch reads AVGKSS. An NMP region spans residues 288–346; sequence KMKDVIAEAIAKLEAIVAPKDSVEGEEEGEEEEEEENVDDAQELLDGIKESMEQNAGRL. The interval 308–327 is disordered; that stretch reads DSVEGEEEGEEEEEEENVDD. Positions 311–327 are enriched in acidic residues; that stretch reads EGEEEGEEEEEEENVDD. AMP contacts are provided by residues 323–346, 373–376, and Gln-380; these read ENVDDAQELLDGIKESMEQNAGRL and GFPK. Positions 376-568 form a coiled coil; sequence KTYDQAKDLF…EERELLEVQS (193 aa). Positions 428-438 are LID; it reads NLPESVVAGTH. Arg-446 contributes to the AMP binding site. An ATP-binding site is contributed by Gly-478. A DPY-30 region spans residues 570-614; it reads PLRNYLMTYVMPTLMQGLNECCKVRPEDPVDFLAEYLFKNNPEMQ.

It in the central section; belongs to the adenylate kinase family. The protein in the C-terminal section; belongs to the dpy-30 family.

It localises to the cytoplasm. The protein localises to the cytosol. It is found in the cell projection. The protein resides in the cilium. Its subcellular location is the flagellum. The enzyme catalyses AMP + ATP = 2 ADP. The catalysed reaction is a 2'-deoxyribonucleoside 5'-diphosphate + ATP = a 2'-deoxyribonucleoside 5'-triphosphate + ADP. It catalyses the reaction a ribonucleoside 5'-diphosphate + ATP = a ribonucleoside 5'-triphosphate + ADP. In terms of biological role, nucleoside monophosphate (NMP) kinase that catalyzes the reversible transfer of the terminal phosphate group between nucleoside triphosphates and monophosphates. Has highest activity toward AMP, and weaker activity toward dAMP, CMP and dCMP. Also displays broad nucleoside diphosphate kinase activity. Involved in maintaining ciliary structure and function. The polypeptide is Adenylate kinase 7 (Ak7) (Mus musculus (Mouse)).